Consider the following 486-residue polypeptide: Zinc finger CCCH domain-containing protein 49 (486 aa).

A C3H1-type zinc finger spans residues 157 to 184; it reads RNRAHVCSFYVRGECTRGAECPYRHEMP. The RRM domain occupies 228–301; that stretch reads RTLYIGGLDS…VRLKLMWGKP (74 aa). 2 disordered regions span residues 329–348 and 379–486; these read SQQQ…QQQP and LVES…NGMT. 2 stretches are compositionally biased toward low complexity: residues 389–407 and 415–430; these read PGPQ…GQSY and YHGG…YGGY. Pro residues predominate over residues 431 to 444; the sequence is MPPPRMPYQQPPQY. The span at 445-486 shows a compositional bias: low complexity; it reads PAYQPMLAPPAQSQASSLQQPAPATQQLGQGPQQQTTQNGMT.

This chain is Zinc finger CCCH domain-containing protein 49, found in Oryza sativa subsp. japonica (Rice).